The chain runs to 388 residues: Ferrochelatase (388 aa).

Residues His196 and Glu277 each coordinate Fe cation.

The protein belongs to the ferrochelatase family.

It is found in the cytoplasm. It catalyses the reaction heme b + 2 H(+) = protoporphyrin IX + Fe(2+). It participates in porphyrin-containing compound metabolism; protoheme biosynthesis; protoheme from protoporphyrin-IX: step 1/1. In terms of biological role, catalyzes the ferrous insertion into protoporphyrin IX. In Nostoc punctiforme (strain ATCC 29133 / PCC 73102), this protein is Ferrochelatase.